We begin with the raw amino-acid sequence, 119 residues long: Beta-2-microglobulin (119 aa).

Residues M1 to A20 form the signal peptide. The 90-residue stretch at P25–K114 folds into the Ig-like C1-type domain. C45 and C100 are oxidised to a cystine.

Belongs to the beta-2-microglobulin family. As to quaternary structure, heterodimer of an alpha chain and a beta chain. Beta-2-microglobulin is the beta-chain of major histocompatibility complex class I molecules.

Its subcellular location is the secreted. Component of the class I major histocompatibility complex (MHC). Involved in the presentation of peptide antigens to the immune system. This is Beta-2-microglobulin (B2M) from Saguinus niger (Black tamarin).